The sequence spans 576 residues: Arginine--tRNA ligase (576 aa).

Positions 126–136 match the 'HIGH' region motif; it reads ANPTGPMHIGH.

The protein belongs to the class-I aminoacyl-tRNA synthetase family. As to quaternary structure, monomer.

Its subcellular location is the cytoplasm. It carries out the reaction tRNA(Arg) + L-arginine + ATP = L-arginyl-tRNA(Arg) + AMP + diphosphate. The protein is Arginine--tRNA ligase of Rickettsia rickettsii (strain Iowa).